A 444-amino-acid chain; its full sequence is MAGEGDPEDAAHNMGNHLPLLPAEEEEEDEIEMEVEDQDNKEPKKPNIINFDTSLPTSHTYLGSDMEEFHGRTLHDDDSCPVIPVLPQVVMTLIPGQTLPLQLFSPQEVSMVRNLIQKDRTFAVLAYSNVQEREAQFGTTAEIYAYREEQDFGIEVVKVKAIGRQRFKVLEIRTQSDGIQQAKVQILPECVLPSTMSAVQLESLNKCRIFPSKPVSWEDQCSYKWWQKYQKRKFHCANLTSWPRWLYSLYDAETLMDRIKKQLREWDENLKEDSLPSNPIDFSYRVAACLPIDDVLRIQLLKIGSAIQRLRCELDIMNKCTSLCCKQCQETEITTKNEIFSLSLCGPMAAYVNPHGYVHETLTVYKASNLNLIGRPSTDHSWFPGYAWTIAQCRICASHIGWKFTATKKDMSPQKFWGLTRSALLPTIPDTEDDISPDKVILCL.

The interval 1–52 (MAGEGDPEDAAHNMGNHLPLLPAEEEEEDEIEMEVEDQDNKEPKKPNIINFD) is disordered. Residues 23–37 (AEEEEEDEIEMEVED) are compositionally biased toward acidic residues. A Lon N-terminal domain is found at 80–321 (CPVIPVLPQV…CELDIMNKCT (242 aa)). Residues 320–428 (CTSLCCKQCQ…LTRSALLPTI (109 aa)) form the CULT domain. Cys325 and Cys328 together coordinate Zn(2+). Positions 380, 382, and 388 each coordinate (S)-thalidomide. The Zn(2+) site is built by Cys393 and Cys396.

This sequence belongs to the CRBN family. Component of a DCX (DDB1-CUL4-X-box) protein ligase complex, at least composed of CRBN, CUL4A, DDB1 and RBX1. Interacts directly with DDB1. Interacts with KCNT1. Interacts with ILF2. Interacts with TRAF6 and ECSIT. In terms of processing, ubiquitinated, ubiquitination is mediated by its own DCX protein ligase complex.

It localises to the cytoplasm. The protein localises to the nucleus. Its subcellular location is the membrane. It functions in the pathway protein modification; protein ubiquitination. In terms of biological role, substrate recognition component of a DCX (DDB1-CUL4-X-box) E3 protein ligase complex that mediates the ubiquitination and subsequent proteasomal degradation of target proteins, such as MEIS2, ILF2 or GLUL. Normal degradation of key regulatory proteins is required for normal limb outgrowth and expression of the fibroblast growth factor FGF8. Maintains presynaptic glutamate release and consequently cognitive functions, such as memory and learning, by negatively regulating large-conductance calcium-activated potassium (BK) channels in excitatory neurons. Likely to function by regulating the assembly and neuronal surface expression of BK channels via its interaction with KCNT1. May also be involved in regulating anxiety-like behaviors via a BK channel-independent mechanism. Plays a negative role in TLR4 signaling by interacting with TRAF6 and ECSIT, leading to inhibition of ECSIT ubiquitination, an important step of the signaling. This Bos taurus (Bovine) protein is Protein cereblon (CRBN).